The sequence spans 261 residues: uncharacterized protein (261 aa).

Residues 16 to 147 (KQTSLVLQNL…QTNVNVLRSQ (132 aa)) are a coiled coil.

It localises to the cytoplasm. This is an uncharacterized protein from Schizosaccharomyces pombe (strain 972 / ATCC 24843) (Fission yeast).